The primary structure comprises 568 residues: MTLRLSRRAYAEMFGPTTGDRVRLADTELLIEIERDFTTYGEEVKFGGGKVIRDGMGQSQRVAADVPDTVITNAVILDHWGIVKADIAIKHGRIAAIGKAGNPDIQPGVTIAIGAATEVIAGEGLIVTAGGIDTHIHFISPQQIDEALASGVTTMLGGGTGPATGTNATTCTPGPWHMERMLQAADGWPINLGFLGKGNASLPQPLVEQIAAGAIGLKLHEDWGTTPAAIDNCLSVADDTDTQVAIHTDTLNEAGFVESTVAAFKGRTIHTYHTEGAGGGHAPDILKVCGEMNVLPSSTNPTRPYTINTLDEHLDMLMVCHHLDPSIAEDLAFAESRIRRETIAAEDILHDLGALSMLSSDSQAMGRVGEVIIRTWQTAHKMKVQRGALPEDTARNDNFRAKRYVAKYTINPALTHGIAHEVGSIEPGKWADLVLWEPAFFGIKPSMILKGGMIAVAQMGDPNASIPTPQPVHYREMFATRGGALARTSLTFVSQMAADAGIAERYGLAKRIVPVRNCRNVTKADMIHNAWRPSISVDPETYDVIADGQLLTCEPATVLPMAQRYFLF.

The 439-residue stretch at 130 to 568 (GGIDTHIHFI…LPMAQRYFLF (439 aa)) folds into the Urease domain. H135, H137, and K218 together coordinate Ni(2+). An N6-carboxylysine modification is found at K218. Residue H220 coordinates substrate. 2 residues coordinate Ni(2+): H247 and H273. The active-site Proton donor is H321. A Ni(2+)-binding site is contributed by D361.

The protein belongs to the metallo-dependent hydrolases superfamily. Urease alpha subunit family. As to quaternary structure, heterotrimer of UreA (gamma), UreB (beta) and UreC (alpha) subunits. Three heterotrimers associate to form the active enzyme. Requires Ni cation as cofactor. Post-translationally, carboxylation allows a single lysine to coordinate two nickel ions.

The protein localises to the cytoplasm. It catalyses the reaction urea + 2 H2O + H(+) = hydrogencarbonate + 2 NH4(+). Its pathway is nitrogen metabolism; urea degradation; CO(2) and NH(3) from urea (urease route): step 1/1. The chain is Urease subunit alpha from Burkholderia orbicola (strain MC0-3).